A 563-amino-acid chain; its full sequence is GTPase Obg (563 aa).

One can recognise an Obg domain in the interval 2 to 168; it reads SDFVDRVTVH…RDVILELKSI (167 aa). The region spanning 169-349 is the OBG-type G domain; sequence ADVALVGFPS…LNFALSALVH (181 aa). GTP-binding positions include 175-182, 200-204, 221-224, 301-304, and 330-332; these read GFPSAGKS, FTTLV, DVPG, NKID, and STA. Mg(2+) is bound by residues S182 and T202. In terms of domain architecture, OCT spans 383 to 469; that stretch reads DEGGSALEFT…ARMVEFDWDP (87 aa). 2 disordered regions span residues 478–509 and 528–563; these read LDGSNLGARGKDLRLEEQDPRTHRRSNAERRA and ERKAGHWADPTVDDDRHDENSLFGHGESSEDGETEE. Residues 486 to 509 show a composition bias toward basic and acidic residues; the sequence is RGKDLRLEEQDPRTHRRSNAERRA.

The protein belongs to the TRAFAC class OBG-HflX-like GTPase superfamily. OBG GTPase family. Monomer. The cofactor is Mg(2+).

It localises to the cytoplasm. Functionally, an essential GTPase which binds GTP, GDP and possibly (p)ppGpp with moderate affinity, with high nucleotide exchange rates and a fairly low GTP hydrolysis rate. Plays a role in control of the cell cycle, stress response, ribosome biogenesis and in those bacteria that undergo differentiation, in morphogenesis control. The polypeptide is GTPase Obg (Bifidobacterium longum subsp. infantis (strain ATCC 15697 / DSM 20088 / JCM 1222 / NCTC 11817 / S12)).